The sequence spans 328 residues: MSFRREKFIEFGGPDGGNGGNGGSVIFVASSAVNTLLYFRYNQHIRAENGKAGSGKGKFGAAGRNRVVEVPVGTQLYDEDGNTLIADLNNIGQQYTVAAGGRGGIGNAQYKSSTNRAPTYFTYGTLGEEHCVLLKLKIVSDVGIIGMPNAGKSSLLSRCTASKTKVSDYPFTTLEPHLGVAYANGCELVLADIPGLIENASSGAGLGHKFLKHIERCVILLHLVDCSLPDIVSAYELVRQELKLHSQELTGKQEVVILNKCDLLSEGEVREKQKLLESSTKKEVITLSMGDELDSLIVFLHAQVKKAVVTEPSDTSFDPFLYVHYNKK.

The 139-residue stretch at 1-139 folds into the Obg domain; the sequence is MSFRREKFIE…HCVLLKLKIV (139 aa). The OBG-type G domain maps to 140–309; it reads SDVGIIGMPN…LHAQVKKAVV (170 aa). GTP is bound by residues 146–153, 171–175, 192–195, 259–262, and 290–292; these read GMPNAGKS, FTTLE, DIPG, NKCD, and GDE. Mg(2+) is bound by residues Ser-153 and Thr-173.

It belongs to the TRAFAC class OBG-HflX-like GTPase superfamily. OBG GTPase family. Monomer. The cofactor is Mg(2+).

It localises to the cytoplasm. Its function is as follows. An essential GTPase which binds GTP, GDP and possibly (p)ppGpp with moderate affinity, with high nucleotide exchange rates and a fairly low GTP hydrolysis rate. Plays a role in control of the cell cycle, stress response, ribosome biogenesis and in those bacteria that undergo differentiation, in morphogenesis control. The sequence is that of GTPase Obg 2 from Anaplasma marginale (strain Florida).